A 243-amino-acid polypeptide reads, in one-letter code: tRNA pseudouridine synthase A (243 aa).

D51 (nucleophile) is an active-site residue. Y111 provides a ligand contact to substrate.

Belongs to the tRNA pseudouridine synthase TruA family. As to quaternary structure, homodimer.

It carries out the reaction uridine(38/39/40) in tRNA = pseudouridine(38/39/40) in tRNA. Its function is as follows. Formation of pseudouridine at positions 38, 39 and 40 in the anticodon stem and loop of transfer RNAs. This chain is tRNA pseudouridine synthase A, found in Neorickettsia sennetsu (strain ATCC VR-367 / Miyayama) (Ehrlichia sennetsu).